The chain runs to 565 residues: MKATQTLIATTKELPKEAVLISHQYMLKAGLIKKLASGIYTWMPLGLKVLQKIQNIVRDEMNKAGASELLLPSILPSELLQETHRWDKFGPELLKLHDRHNRDFCYGPTHEEPIVDMARDTIKSYKQLPLNLYQIQTKFRDEIRPRFGVMRAREFIMKDAYSFHENSQCLRNTYNTMYATYCNILDKIGLAYRPVKADTGAIGGDNSHEFQVLANAGEDIICYSNGSDYAANIELATYAKPDLSKRVNSQNTIEKIHTPNIKTIEKLCKEMSFDIKKTIKTMVIKDAGGNFFALVIRGDHELNETKINKLDQIIAPYTLATKEEIFSIFNANPGSLGIYNCPISIIADYSAIAITDLVCGANEDDYHFTNVNWDRDVTNYQIADIRNVVTGDISPDGKGTLELTNGIEVGHIFELEDVYSKPMNANIIGQDGKSKPMLMGCYGFGVSRVMAAAIEQSHDENGIIWPESIAPYQVAILPINYNKSDKIKEVADKLYQDLLGDGIDVLLDDRGARPGVMFADADLIGYSHHVVIGDRLLEQGLIEYKNRKTQEKQEITIAELIKILK.

This sequence belongs to the class-II aminoacyl-tRNA synthetase family. ProS type 1 subfamily. In terms of assembly, homodimer.

It localises to the cytoplasm. The catalysed reaction is tRNA(Pro) + L-proline + ATP = L-prolyl-tRNA(Pro) + AMP + diphosphate. Catalyzes the attachment of proline to tRNA(Pro) in a two-step reaction: proline is first activated by ATP to form Pro-AMP and then transferred to the acceptor end of tRNA(Pro). As ProRS can inadvertently accommodate and process non-cognate amino acids such as alanine and cysteine, to avoid such errors it has two additional distinct editing activities against alanine. One activity is designated as 'pretransfer' editing and involves the tRNA(Pro)-independent hydrolysis of activated Ala-AMP. The other activity is designated 'posttransfer' editing and involves deacylation of mischarged Ala-tRNA(Pro). The misacylated Cys-tRNA(Pro) is not edited by ProRS. In Francisella tularensis subsp. tularensis (strain WY96-3418), this protein is Proline--tRNA ligase.